The sequence spans 685 residues: ABC transporter G family member 26 (685 aa).

Residues Leu65 to Ile329 enclose the ABC transporter domain. Residue Gly124–Thr131 participates in ATP binding. The ABC transmembrane type-2 domain occupies Asp414–Tyr623. A run of 6 helical transmembrane segments spans residues Phe432–Trp452, Leu468–Phe488, Met518–Phe538, Ile542–Ala562, Ala576–Gln596, and Thr648–Tyr668.

It belongs to the ABC transporter superfamily. ABCG family. Eye pigment precursor importer (TC 3.A.1.204) subfamily. In terms of assembly, homo- or heterodimer. Mostly expressed in flowers, especially in tapetum within anthers.

The protein resides in the cell membrane. Its subcellular location is the endoplasmic reticulum membrane. Functionally, mediates the transport of sporopollenin precursors (e.g. polyketides) across the tapetum plasma membrane into the anther locule for polymerization on developing microspore walls, thus being required for male fertility and pollen exine formation and patterning prior to tapetum programmed cell death. The protein is ABC transporter G family member 26 of Arabidopsis thaliana (Mouse-ear cress).